The sequence spans 279 residues: DegV domain-containing protein spr1019 (279 aa).

The DegV domain maps to 4-277; it reads IKIVTDSSVT…ENAWAILIRY (274 aa). Hexadecanoate contacts are provided by threonine 62 and serine 94.

Its function is as follows. May bind long-chain fatty acids, such as palmitate, and may play a role in lipid transport or fatty acid metabolism. The protein is DegV domain-containing protein spr1019 of Streptococcus pneumoniae (strain ATCC BAA-255 / R6).